Consider the following 409-residue polypeptide: Dihydrolipoyllysine-residue succinyltransferase component of 2-oxoglutarate dehydrogenase complex (409 aa).

One can recognise a Lipoyl-binding domain in the interval 2-77; that stretch reads AIEIKAPTFP…LSNELLGKLN (76 aa). Lys-43 bears the N6-lipoyllysine mark. The Peripheral subunit-binding (PSBD) domain maps to 112–149; that stretch reads ILSPAARKLAEEAGIDPNSIAGTGKGGRVTKEDVVAAV. Catalysis depends on residues His-380 and Asp-384.

The protein belongs to the 2-oxoacid dehydrogenase family. In terms of assembly, forms a 24-polypeptide structural core with octahedral symmetry. Part of the 2-oxoglutarate dehydrogenase (OGDH) complex composed of E1 (2-oxoglutarate dehydrogenase), E2 (dihydrolipoamide succinyltransferase) and E3 (dihydrolipoamide dehydrogenase); the complex contains multiple copies of the three enzymatic components (E1, E2 and E3). The cofactor is (R)-lipoate.

It catalyses the reaction N(6)-[(R)-dihydrolipoyl]-L-lysyl-[protein] + succinyl-CoA = N(6)-[(R)-S(8)-succinyldihydrolipoyl]-L-lysyl-[protein] + CoA. Its pathway is amino-acid degradation; L-lysine degradation via saccharopine pathway; glutaryl-CoA from L-lysine: step 6/6. E2 component of the 2-oxoglutarate dehydrogenase (OGDH) complex which catalyzes the second step in the conversion of 2-oxoglutarate to succinyl-CoA and CO(2). The chain is Dihydrolipoyllysine-residue succinyltransferase component of 2-oxoglutarate dehydrogenase complex (sucB) from Pseudomonas aeruginosa (strain ATCC 15692 / DSM 22644 / CIP 104116 / JCM 14847 / LMG 12228 / 1C / PRS 101 / PAO1).